A 389-amino-acid chain; its full sequence is Lipid-A-disaccharide synthase (389 aa).

The protein belongs to the LpxB family.

The catalysed reaction is a lipid X + a UDP-2-N,3-O-bis[(3R)-3-hydroxyacyl]-alpha-D-glucosamine = a lipid A disaccharide + UDP + H(+). It participates in bacterial outer membrane biogenesis; LPS lipid A biosynthesis. Functionally, condensation of UDP-2,3-diacylglucosamine and 2,3-diacylglucosamine-1-phosphate to form lipid A disaccharide, a precursor of lipid A, a phosphorylated glycolipid that anchors the lipopolysaccharide to the outer membrane of the cell. This chain is Lipid-A-disaccharide synthase, found in Burkholderia vietnamiensis (strain G4 / LMG 22486) (Burkholderia cepacia (strain R1808)).